Reading from the N-terminus, the 396-residue chain is Probable sugar efflux transporter (396 aa).

A run of 12 helical transmembrane segments spans residues 15–35 (VVTLAVAAFIFNTTEFVPVGL), 50–70 (VGIMLTIYAWVVALMSLPFML), 81–101 (LICLFVVFIASHVLSFLSWSF), 103–123 (VLVISRIGVAFAHAIFWSITA), 136–156 (AQALSLIATGTALAMVLGLPL), 170–190 (FFAIGIGALITLLCLIKLLPL), 209–229 (PALMSIYLLTVVVVTAHYTAY), 246–266 (FATALLLLLGGAGIIGSVIFG), 275–295 (ALVSTAIALLLVCLALLLPAA), 299–319 (IHLGVLSIFWGIAMMIIGLGM), 333–353 (VAMALFSGIFNIGIGAGALVG), and 364–384 (MIGYVGTVPAFAALIWSIIIF).

The protein belongs to the major facilitator superfamily. SotB (TC 2.A.1.2) family.

Its subcellular location is the cell inner membrane. Involved in the efflux of sugars. The physiological role may be the reduction of the intracellular concentration of toxic sugars or sugar metabolites. This Escherichia coli O157:H7 (strain EC4115 / EHEC) protein is Probable sugar efflux transporter.